Consider the following 301-residue polypeptide: uncharacterized protein (301 aa).

Residues 1 to 5 (MSYKK) are Extracellular-facing. A helical membrane pass occupies residues 6–26 (FVYFINLFFLLGATLLTFFLI). At 27–112 (LAGGRTTGVL…NRNAYYYLSR (86 aa)) the chain is on the cytoplasmic side. Residues 113–133 (VGWAMLLIGLFFLLITLVSVI) form a helical membrane-spanning segment. At 134 to 143 (ASLIRYNRRT) the chain is on the extracellular side. Residues 144–164 (AALATAMSWITLFFITLSACL) traverse the membrane as a helical segment. Topologically, residues 165-191 (YTGCYAKAVKAFHHENRDARLGPKNFG) are cytoplasmic. The helical transmembrane segment at 192 to 212 (LIWTTVFLLIVNAICCTIMVA) threads the bilayer. The Extracellular segment spans residues 213–301 (THKRNEYIYD…YTEQNVPVVS (89 aa)). Residues 254 to 301 (VQQSQSHQNHRFFKKLRTKKRTVTSAGDEPDRVQEERVYTEQNVPVVS) form a disordered region. Positions 261 to 275 (QNHRFFKKLRTKKRT) are enriched in basic residues. Positions 282–292 (EPDRVQEERVY) are enriched in basic and acidic residues.

Belongs to the SUR7 family.

Its subcellular location is the cell membrane. Its function is as follows. Involved in sporulation and affects the sphingolipid composition of the plasma membrane. This is an uncharacterized protein from Saccharomyces cerevisiae (strain ATCC 204508 / S288c) (Baker's yeast).